A 328-amino-acid polypeptide reads, in one-letter code: Carbonic anhydrase-related protein 10 (328 aa).

An Alpha-carbonic anhydrase domain is found at 31-301 (GWWAYKEVVQ…LNNRCIRTNI (271 aa)).

Belongs to the alpha-carbonic anhydrase family.

Functionally, does not have a catalytic activity. The protein is Carbonic anhydrase-related protein 10 (CA10) of Macaca fascicularis (Crab-eating macaque).